Reading from the N-terminus, the 44-residue chain is U9-ctenitoxin-Co1a (44 aa).

Cystine bridges form between Cys3/Cys17, Cys10/Cys23, Cys16/Cys33, and Cys25/Cys31.

As to expression, expressed by the venom gland.

The protein resides in the secreted. In terms of biological role, insecticidal neurotoxin that reversibly inhibits the N-methyl-D-aspartate (NMDA)-subtype of ionotropic glutamate receptor (GRIN) and inhibits inactivation of insect sodium channels (Nav). In vivo, is highly toxic to insects. The polypeptide is U9-ctenitoxin-Co1a (Ctenus ornatus (Brazilian spider)).